A 348-amino-acid chain; its full sequence is Dihydroorotase (348 aa).

2 residues coordinate Zn(2+): His-17 and His-19. Substrate contacts are provided by residues 19-21 and Asn-45; that span reads HLR. Zn(2+) contacts are provided by Lys-103, His-140, and His-178. Lys-103 carries the N6-carboxylysine modification. His-140 provides a ligand contact to substrate. Leu-223 lines the substrate pocket. Asp-251 is a Zn(2+) binding site. Asp-251 is an active-site residue. Substrate-binding residues include His-255 and Ala-267.

This sequence belongs to the metallo-dependent hydrolases superfamily. DHOase family. Class II DHOase subfamily. Homodimer. Zn(2+) is required as a cofactor.

It catalyses the reaction (S)-dihydroorotate + H2O = N-carbamoyl-L-aspartate + H(+). The protein operates within pyrimidine metabolism; UMP biosynthesis via de novo pathway; (S)-dihydroorotate from bicarbonate: step 3/3. Functionally, catalyzes the reversible cyclization of carbamoyl aspartate to dihydroorotate. The polypeptide is Dihydroorotase (Escherichia coli O6:H1 (strain CFT073 / ATCC 700928 / UPEC)).